The sequence spans 185 residues: Protein GrpE (185 aa).

A compositionally biased stretch (basic and acidic residues) spans 1-20; it reads MSQEKKEELQSEAQVTKEET. Residues 1 to 28 form a disordered region; sequence MSQEKKEELQSEAQVTKEETPQANEAAA.

The protein belongs to the GrpE family. In terms of assembly, homodimer.

Its subcellular location is the cytoplasm. Functionally, participates actively in the response to hyperosmotic and heat shock by preventing the aggregation of stress-denatured proteins, in association with DnaK and GrpE. It is the nucleotide exchange factor for DnaK and may function as a thermosensor. Unfolded proteins bind initially to DnaJ; upon interaction with the DnaJ-bound protein, DnaK hydrolyzes its bound ATP, resulting in the formation of a stable complex. GrpE releases ADP from DnaK; ATP binding to DnaK triggers the release of the substrate protein, thus completing the reaction cycle. Several rounds of ATP-dependent interactions between DnaJ, DnaK and GrpE are required for fully efficient folding. This chain is Protein GrpE, found in Sulfurimonas denitrificans (strain ATCC 33889 / DSM 1251) (Thiomicrospira denitrificans (strain ATCC 33889 / DSM 1251)).